Reading from the N-terminus, the 880-residue chain is MAPSVVPQSAAGGAALQASADDQLTIEMLGAGQEVGRSCCVLKYRGKTIVCDTGVHPAFTGIAALPFIDELDWSTVDAILITHFHLDHAAALTYIMEKTNFRDGHGKVYMTHPTKAVYRFLMSDFVRISNAGNDDNLFDENEMLASWRQIEAVDFHQDVSIAGGLRFTSYHAGHVLGACMFLIEIAGLRILYTGDFSREEDRHLVQAEIPPVKPDVLICESTYGTQTHEPRLDKEHRFTSQIHHIIKRGGRVLLPVFVLGRAQELLLLLDEYWAAHPELHSVPIYYASALAKKCISVYQTYIHTMNDHIRTRFNRRDNPFVFKHISNLRSLEKFEDRGPCVMMASPGFMQSGVSRELLERWAPDKRNGLIVSGYSVEGTMARNILNEPDEIIGINGQKIPRRMSVDYISFSAHVDFAQNSRFIDEIKAQHIVLVHGEQNNMSKLRAALQARFTARGSDVKIHTPRNCEPLVLQFRAQRTAKAIGTIAAKPPAQGDIVDGLLISKDFAYTILDPKDLTDFTGLSTSTIVQRQRVALAVSWEMVRWHLQGMYGRLQEGVDAEEGLRTLRIMGAVDVRQSARHELLVEWVSSIANDMVADSIVALLLGIDSAPSSVKMTMHNHHHHHHHHHHHHPGDAKAEETDDDAEATTEDEEARTPTESAANLPMHPFSEAALVAESEVRAKAATDEAVHRDAYQLAKMEHMAAFLEAHFGQVEELVIPEAPISEEIEESVPKVKVETEREAEKDEAGDESMSTLQPEPDSVTDVDKPELAPPAEQATASPPISIASLFDGEARSALRVFLDEAEAVIDVENLVILASSESFRARVQHLCTLALRSFTSLSDAFYLPQQMGTSLFQGKHSQLATIPEFGEERPSKMVRSS.

Positions 83, 85, 87, 88, 174, and 195 each coordinate Zn(2+). His413 (proton donor) is an active-site residue. Position 435 (His435) interacts with Zn(2+). The segment covering 618–631 has biased composition (basic residues); sequence HNHHHHHHHHHHHH. Disordered stretches follow at residues 618–666 and 729–783; these read HNHH…LPMH and ESVP…SPPI. Residues 639-652 show a composition bias toward acidic residues; it reads ETDDDAEATTEDEE. Basic and acidic residues predominate over residues 730–745; it reads SVPKVKVETEREAEKD.

The protein belongs to the metallo-beta-lactamase superfamily. RNA-metabolizing metallo-beta-lactamase-like family. CPSF2/YSH1 subfamily.

The protein localises to the nucleus. Component of the cleavage factor I (CF I) involved in pre-mRNA 3'-end processing. This chain is Endoribonuclease YSH1 (YSH1), found in Mycosarcoma maydis (Corn smut fungus).